The following is a 485-amino-acid chain: GlcNAc-binding protein A (485 aa).

The first 29 residues, 1–29, serve as a signal peptide directing secretion; sequence MKKQPQKTLLAIALSVVSGTAMSHGYVSA. The 171-residue stretch at 30–200 folds into the Chitin-binding type-4 domain; that stretch reads VENGVAEARV…SFYNVIDVKF (171 aa). One can recognise a Chitin-binding type-3 domain in the interval 437–478; that stretch reads AGTKVLASDGAIYQCKPFPYSGYCVQWTPTATQYQPGTGSHW.

Belongs to the GbpA family.

It is found in the secreted. Functionally, probably interacts with GlcNAc residues. May promote attachment to both epithelial cell surfaces and chitin. The polypeptide is GlcNAc-binding protein A (Vibrio vulnificus (strain YJ016)).